The chain runs to 133 residues: ATP synthase epsilon chain, chloroplastic (133 aa).

The protein belongs to the ATPase epsilon chain family. In terms of assembly, F-type ATPases have 2 components, CF(1) - the catalytic core - and CF(0) - the membrane proton channel. CF(1) has five subunits: alpha(3), beta(3), gamma(1), delta(1), epsilon(1). CF(0) has three main subunits: a, b and c.

The protein resides in the plastid. It localises to the chloroplast thylakoid membrane. In terms of biological role, produces ATP from ADP in the presence of a proton gradient across the membrane. The chain is ATP synthase epsilon chain, chloroplastic from Piper cenocladum (Ant piper).